A 433-amino-acid polypeptide reads, in one-letter code: Ligand-dependent corepressor (433 aa).

Residues 1–51 (MQRMIQQFAAEYTSKNSSTQDPSQPNSTKNQSLPKASPVTTSPTAATTQNP) form a disordered region. The segment covering 13–34 (TSKNSSTQDPSQPNSTKNQSLP) has biased composition (polar residues). The span at 36 to 48 (ASPVTTSPTAATT) shows a compositional bias: low complexity. Position 42 is a phosphoserine (S42). The short motif at 53-57 (LSKLL) is the Interaction with nuclear receptors element. S63 is modified (phosphoserine). The segment at 64 to 147 (PLDLTVRKSQ…GTREGFGHST (84 aa)) is disordered. The segment covering 93-110 (AGSTSLSHSPGCSSTQGN) has biased composition (polar residues). S249 is subject to Phosphoserine. Residue K254 forms a Glycyl lysine isopeptide (Lys-Gly) (interchain with G-Cter in SUMO2) linkage. The disordered stretch occupies residues 299 to 348 (QSRKSMLDAGPDSWGSDAEQSTSGQPYPTSDQEGDPGSKQPRKKRGRYRQ). Positions 316-329 (AEQSTSGQPYPTSD) are enriched in polar residues. The Nuclear localization signal signature appears at 339-345 (PRKKRGR). One can recognise an HTH psq-type domain in the interval 340-392 (RKKRGRYRQYNSEILEEAISVVMSGKMSVSKAQSIYGIPHSTLEYKVKERLGT). R345 participates in a covalent cross-link: Glycyl lysine isopeptide (Lys-Gly) (interchain with G-Cter in SUMO2). The H-T-H motif DNA-binding region spans 368–388 (VSKAQSIYGIPHSTLEYKVKE). G391 is covalently cross-linked (Glycyl lysine isopeptide (Lys-Gly) (interchain with G-Cter in SUMO2)). The interval 393–412 (LKNPPKKKMKLMRSEGPDVS) is disordered. A Glycyl lysine isopeptide (Lys-Gly) (interchain with G-Cter in SUMO2) cross-link involves residue K414.

In terms of assembly, interacts with ESR1 and ESR2 in the presence of estradiol. Interacts with CTBP1, HDAC3 and HDAC6. Component of a large corepressor complex that contains about 20 proteins, including CTBP1, CTBP2, HDAC1 and HDAC2. As to expression, ubiquitous.

The protein resides in the nucleus. In terms of biological role, may act as transcription activator that binds DNA elements with the sequence 5'-CCCTATCGATCGATCTCTACCT-3'. Repressor of ligand-dependent transcription activation by target nuclear receptors. Repressor of ligand-dependent transcription activation by ESR1, ESR2, NR3C1, PGR, RARA, RARB, RARG, RXRA and VDR. The protein is Ligand-dependent corepressor of Homo sapiens (Human).